Consider the following 267-residue polypeptide: Serine/threonine-protein kinase 1 (267 aa).

A Protein kinase domain is found at 18–266; the sequence is IQNNVRLVDG…YETVIKHSFL (249 aa). ATP is bound by residues 24-32 and Lys47; that span reads LVDGKFGKM. The active-site Proton acceptor is the Asp134.

This sequence belongs to the protein kinase superfamily. Ser/Thr protein kinase family.

It catalyses the reaction L-seryl-[protein] + ATP = O-phospho-L-seryl-[protein] + ADP + H(+). The catalysed reaction is L-threonyl-[protein] + ATP = O-phospho-L-threonyl-[protein] + ADP + H(+). This is Serine/threonine-protein kinase 1 (PK1) from Heliothis zea nuclear polyhedrosis virus (HzSNPV).